Consider the following 189-residue polypeptide: MASPFALLMVLVVLSCKSSCSLGCDLPETHSLDNRRTLMLLAQMSRISPSSCLMDRHDFGFPQEEFDGNQFQKAPAISVLHELIQQIFNLFTTKDSSAAWDEDLLDKFCTELYQQLNDLEACVMQEERVGETPLMNADSILAVKKYFRRITLYLTEKKYSPCAWEVVRAEIMRSLSLSTNLQERLRRKE.

The signal sequence occupies residues Met1–Gly23. Cystine bridges form between Cys24–Cys122 and Cys52–Cys162.

This sequence belongs to the alpha/beta interferon family. In terms of assembly, interacts with CR2.

The protein resides in the secreted. Its function is as follows. Produced by macrophages, IFN-alpha have antiviral activities. Interferon stimulates the production of two enzymes: a protein kinase and an oligoadenylate synthetase. The chain is Interferon alpha-1/13 (IFNA1) from Homo sapiens (Human).